A 331-amino-acid polypeptide reads, in one-letter code: UBX domain-containing protein 2B (331 aa).

Disordered stretches follow at residues 1–26 (MAEGGGAEPEEQERRSSRPRPPSARD) and 38–63 (EMKCKSSKPDRSTATAFKSPRTPPLR). N-acetylalanine is present on Ala2. Basic and acidic residues predominate over residues 38 to 48 (EMKCKSSKPDR). Ser56 carries the phosphoserine modification. Thr59 carries the post-translational modification Phosphothreonine. Phosphoserine is present on Ser66. In terms of domain architecture, SEP spans 141 to 206 (DVQILLRLWS…MEDHQDQEYI (66 aa)). Ser231, Ser234, and Ser235 each carry phosphoserine. Residues 252–329 (DSVPTTKIQI…DILNTVILQQ (78 aa)) enclose the UBX domain.

This sequence belongs to the NSFL1C family. In terms of assembly, interacts with VCP. Does not bind ubiquitin. Present at high level in brain. Also present in liver, kidney, spleen, testis, lung and heart (at protein level).

It is found in the nucleus. It localises to the cytoplasm. The protein localises to the cytosol. Its subcellular location is the endoplasmic reticulum. The protein resides in the golgi apparatus. It is found in the cytoskeleton. It localises to the microtubule organizing center. The protein localises to the centrosome. Functionally, adapter protein required for Golgi and endoplasmic reticulum biogenesis. Involved in Golgi and endoplasmic reticulum maintenance during interphase and in their reassembly at the end of mitosis. The complex formed with VCP has membrane fusion activity; membrane fusion activity requires USO1-GOLGA2 tethering and BET1L. VCPIP1 is also required, but not its deubiquitinating activity. Together with NSFL1C/p47, regulates the centrosomal levels of kinase AURKA/Aurora A during mitotic progression by promoting AURKA removal from centrosomes in prophase. Also, regulates spindle orientation during mitosis. The chain is UBX domain-containing protein 2B (Ubxn2b) from Rattus norvegicus (Rat).